A 934-amino-acid polypeptide reads, in one-letter code: Desmocollin 2-like protein (934 aa).

4 Cadherin domains span residues 167-274 (RWRP…APEF), 274-381 (FTGN…PPTF), 382-494 (KEKL…GPEF), and 495-600 (NPNI…IPVI). Topologically, residues 167 to 716 (RWRPLPFSVV…SASVSLGNYG (550 aa)) are extracellular. N-linked (GlcNAc...) asparagine glycans are attached at residues Asn-197, Asn-296, and Asn-316. Residues Asn-509, Asn-565, and Asn-569 are each glycosylated (N-linked (GlcNAc...) asparagine). A helical membrane pass occupies residues 717–737 (ILALVLSGLLLLLLCLFLIFF). The Cytoplasmic portion of the chain corresponds to 738 to 934 (CTTKRDKLQI…ICYTTNKTGK (197 aa)).

As to expression, expressed at low levels in the brain and heart.

Its subcellular location is the cell junction. It localises to the desmosome. The protein localises to the cell membrane. Functionally, a component of desmosome cell-cell junctions which are required for positive regulation of cellular adhesion. Involved in the interaction of plaque proteins and intermediate filaments mediating cell-cell adhesion. Involved in the formation and structural organization of desmosome cell-cell junctions during embryonic development. Required for embryogenesis, specifically for progression of epiboly and normal convergence-extension movements during gastrulation. Required for the development of desmosomal-rich midlines in the heart. Plays an important role in ventricular contraction and resulting heart stroke volume. In Danio rerio (Zebrafish), this protein is Desmocollin 2-like protein.